The following is a 247-amino-acid chain: Membrane-embedded CAAX protease MroQ (247 aa).

The signal sequence occupies residues 1 to 17; that stretch reads MTRLWASLLTVIIYILS. The next 3 membrane-spanning stretches (helical) occupy residues 42 to 62, 81 to 101, and 119 to 139; these read VIYIQLVLFLIAATTIILINL, IIPWALLGFALVMIYQMVVSI, and LIIIARKIPIFIFFVSIIGPL. Residue Glu-141 is part of the active site. Transmembrane regions (helical) follow at residues 162-182 and 183-203; these read IVAFIIATTVSSLIFALAHND and FKFIPVYFGMGVIFSLAYVWT.

It belongs to the peptidase U48 family.

It localises to the membrane. Functionally, participates in the regulation of the Agr quorum sensing activity and plays thereby an important role in virulence. Mechanistically, elicits a protease dependent control of Agr activity without playing a role in the processing of the pheromone-precursor AgrD. This chain is Membrane-embedded CAAX protease MroQ (mroQ), found in Staphylococcus aureus (strain USA300).